A 195-amino-acid chain; its full sequence is Endoribonuclease YbeY (195 aa).

Zn(2+) is bound by residues His153, His157, and His163.

The protein belongs to the endoribonuclease YbeY family. It depends on Zn(2+) as a cofactor.

Its subcellular location is the cytoplasm. Functionally, single strand-specific metallo-endoribonuclease involved in late-stage 70S ribosome quality control and in maturation of the 3' terminus of the 16S rRNA. This Prochlorococcus marinus (strain SARG / CCMP1375 / SS120) protein is Endoribonuclease YbeY.